We begin with the raw amino-acid sequence, 533 residues long: NAD(P)H-quinone oxidoreductase chain 4 (533 aa).

15 helical membrane-spanning segments follow: residues 5 to 25, 36 to 56, 70 to 90, 91 to 111, 115 to 135, 137 to 157, 169 to 189, 210 to 230, 244 to 264, 278 to 298, 315 to 335, 336 to 356, 377 to 397, 418 to 438, and 465 to 485; these read VPWLSLSILVPIVGALLVPLV, WYALIVTLITFLITVAAYLTG, VSWLPDLGLTWAVGADGLSMP, LILLTSFITSLACLAAWPVSF, LFYFLLLAMDGGQIAVFAVQD, LLFFLAWELELIPVYLLLAIW, FILYTAGSSLFILLAALAMGF, GFQLLCYAGLLIAFGVKLPIV, TAPVHMLLAGILLKMGGYALL, FAPLLIVLGVVNIIYAALTSF, MGFVLIGVGSFSALGTSGAML, QMISHGLIGASLFFLVGATYD, FALWTVCALASLALPGMSGFV, VVICGLAAVGVILTPIYLLSM, and VYIIGCLLVPIIGIGLYPKLM.

It belongs to the complex I subunit 4 family.

The protein resides in the cellular thylakoid membrane. It carries out the reaction a plastoquinone + NADH + (n+1) H(+)(in) = a plastoquinol + NAD(+) + n H(+)(out). The catalysed reaction is a plastoquinone + NADPH + (n+1) H(+)(in) = a plastoquinol + NADP(+) + n H(+)(out). Functionally, NDH-1 shuttles electrons from NAD(P)H, via FMN and iron-sulfur (Fe-S) centers, to quinones in the respiratory chain. The immediate electron acceptor for the enzyme in this species is believed to be plastoquinone. Couples the redox reaction to proton translocation (for every two electrons transferred, four hydrogen ions are translocated across the cytoplasmic membrane), and thus conserves the redox energy in a proton gradient. This chain is NAD(P)H-quinone oxidoreductase chain 4, found in Synechococcus sp. (strain CC9605).